We begin with the raw amino-acid sequence, 420 residues long: Membrane protein UL43 homolog (420 aa).

11 helical membrane passes run 58-78 (IFSIAAHLAITLSCITLIQFI), 81-101 (KIIYINCTIYAITGFLIAFIV), 114-134 (IGKPAQFIFALISSIADTLIT), 157-177 (LMCFVMLGAFIASYHYVCLAT), 181-201 (LTWKAGFLILTAGTIIGISAP), 203-223 (GNISSLFGFLFLYTILAINVV), 278-298 (QIPMVVMSHATGVLIPVVIAL), 312-332 (TDMLQGVCGVLVGASVSIFIP), 343-363 (IIILLSIIGAMAITLAGFGLV), 364-384 (LGPTLFSACAAALSCYTCINI), and 399-419 (VVKSILGFIITSLLVCILVAL).

This sequence belongs to the alphaherpesvirinae HHV-1 UL43 family.

The protein localises to the host membrane. The sequence is that of Membrane protein UL43 homolog (MDV056) from Gallus gallus (Chicken).